A 213-amino-acid chain; its full sequence is MSHSKSSQRWLKEHFSDPFVKKAQAEGMRSRAAYKLEEILKRDRILRPNMVVIDLGAAPGGWSQQIRKQMGDRGRVIALDIVKMAPLVGIEFLQGDFRDKAVLSQLEIMLKGQPVDLVLSDMAPNKSGMDAMDQPRMMYLAELAMDFADIHVKPGGSFLIKLFHGVGSDDYIRQLRHRYKKVAIRKPLASRKRSPEVYILGDGKLTQNEVSCS.

Gly60, Trp62, Asp80, Asp96, and Asp121 together coordinate S-adenosyl-L-methionine. Lys161 (proton acceptor) is an active-site residue.

The protein belongs to the class I-like SAM-binding methyltransferase superfamily. RNA methyltransferase RlmE family.

The protein resides in the cytoplasm. It carries out the reaction uridine(2552) in 23S rRNA + S-adenosyl-L-methionine = 2'-O-methyluridine(2552) in 23S rRNA + S-adenosyl-L-homocysteine + H(+). Its function is as follows. Specifically methylates the uridine in position 2552 of 23S rRNA at the 2'-O position of the ribose in the fully assembled 50S ribosomal subunit. The protein is Ribosomal RNA large subunit methyltransferase E of Xylella fastidiosa (strain 9a5c).